The following is a 189-amino-acid chain: High affinity copper uptake protein 1 (189 aa).

Residues 1-67 (MDHSAHMGMS…AGLVINTAGE (67 aa)) are Extracellular-facing. Positions 13 to 18 (MGMSDM) match the Methionine segments (Mets) motif motif. The disordered stretch occupies residues 15–36 (MSDMNHSTTMPPSHHHPTSSGS). Low complexity predominate over residues 20–36 (HSTTMPPSHHHPTSSGS). The helical transmembrane segment at 68-88 (MAGAFVAVFLLAMFYEGLKIA) threads the bilayer. Topologically, residues 89 to 131 (REGLLRKSQVSIRYNSMPVPGPNGTILMETHKTVGQQMLSFPH) are cytoplasmic. Thr113 carries the post-translational modification Phosphothreonine. The helical transmembrane segment at 132–152 (LLQTVLHIIQVVISYFLMLIF) threads the bilayer. Residues 153 to 155 (MTY) lie on the Extracellular side of the membrane. A helical transmembrane segment spans residues 156–176 (NGYLCIAVAAGAGTGYFLFSW). The Cytoplasmic segment spans residues 177-189 (KKAVVVDITEHCH). A Cysteine sulfenic acid (-SOH) modification is found at Cys188.

Belongs to the copper transporter (Ctr) (TC 1.A.56) family. SLC31A subfamily. Homotrimer; is stabilized by cisplatin via interactions between cisplatin and the methionine-rich clusters, and could be crucial for the copper(2+) reduction process and copper(1+) stabilization. Heterotrimer between SLC31A1, CCS and SOD1; this heterotrimer is copper(1+)-mediated and its maintenance is regulated through SOD1 activation. Interacts with KDR; this interaction is induced upon VEGFA stimulation leading to SLC31A1 and KDR subsequent co-internalization to early endosomes, thereby activating KDR downstream signaling in endothelial cells. Interacts (via C-terminal domain) with ATOX1 (via dimer form); this interaction improves ATOX1 stability and controls intracellular copper(1+) levels. Interacts with SLC31A2; this interaction stabilizes SLC31A2 and protects its from ubiquitination and degradation. Interacts (via C-terminal domain) with CCS; this interaction is copper(1+)-mediated. Post-translationally, proteolytic cleavage, leading to a truncated form, is facilitated by SLC31A2 and initiated preferentially by CTSL and to a minor extend by CTSB in endolysosomal compartments. A post-CTSL/cathepsin L processing occurs to yield to the fully truncated form. In terms of processing, sulfenylated at Cys-188 after stimulation with VEGFA, which induces SLC31A1-KDR disulfide bond formation and their co-internalization to early endosomes, driving to a sustained VEGFR2 signaling.

The protein localises to the cell membrane. It localises to the early endosome membrane. It is found in the recycling endosome membrane. The protein resides in the apical cell membrane. Its subcellular location is the late endosome membrane. The protein localises to the basolateral cell membrane. It catalyses the reaction Ag(+)(out) = Ag(+)(in). The catalysed reaction is Cu(+)(out) = Cu(+)(in). Functionally, uniporter that mediates the transport of copper(1+) from the extracellular space to the cytoplasm, across the plasma membrane and delivers directly copper(1+) to specific chaperone such as ATOX1, via a copper(1+)- mediated transient interaction between the C-terminal domain and a copper(1+) chaperone, thus controlling intracellular copper(1+) levels. May function in copper(1+) import from the apical membrane thus may drive intestinal copper absorption. The copper(1+) transport mechanism is sodium-independent, saturable and of high-affinity. Also mediates the uptake of silver(1+). May function in the influx of the platinum-containing chemotherapeutic agents. The platinum-containing chemotherapeutic agents uptake is saturable. In vitro, mediates the transport of cadmium(2+) into cells. Also participates in the first step of copper(2+) acquisition by cells through a direct transfer of copper(2+) from copper(2+) carriers in blood, such as ALB to the N-terminal domain of SLC31A1, leading to copper(2+) reduction and probably followed by copper(1+) stabilization. In addition, functions as a redox sensor to promote angiogenesis in endothelial cells, in a copper(1+) transport independent manner, by transmitting the VEGF-induced ROS signal through a sulfenylation at Cys-189 leadin g to a subsequent disulfide bond formation between SLC31A1 and KDR. The SLC31A1-KDR complex is then co-internalized to early endosomes, driving a sustained VEGFR2 signaling. Mobilizes copper(1+) out of the endosomal compartment, making copper(1+) available for export out of the cells. This chain is High affinity copper uptake protein 1, found in Sus scrofa (Pig).